We begin with the raw amino-acid sequence, 695 residues long: Putative ATP-dependent DNA helicase R568 (695 aa).

Residues 86–499 (KFSEEQIKYI…FRNEEIFDSN (414 aa)) form the UvrD-like helicase ATP-binding domain. 107–114 (ACAGSGKT) provides a ligand contact to ATP.

The protein belongs to the helicase family. UvrD subfamily.

It carries out the reaction Couples ATP hydrolysis with the unwinding of duplex DNA by translocating in the 3'-5' direction.. The catalysed reaction is ATP + H2O = ADP + phosphate + H(+). In terms of biological role, ATP-dependent DNA helicase. The polypeptide is Putative ATP-dependent DNA helicase R568 (Acanthamoeba polyphaga mimivirus (APMV)).